Here is a 237-residue protein sequence, read N- to C-terminus: Large ribosomal subunit protein uL1 (237 aa).

This sequence belongs to the universal ribosomal protein uL1 family. As to quaternary structure, part of the 50S ribosomal subunit.

In terms of biological role, binds directly to 23S rRNA. The L1 stalk is quite mobile in the ribosome, and is involved in E site tRNA release. Its function is as follows. Protein L1 is also a translational repressor protein, it controls the translation of the L11 operon by binding to its mRNA. The chain is Large ribosomal subunit protein uL1 from Dehalococcoides mccartyi (strain ATCC BAA-2266 / KCTC 15142 / 195) (Dehalococcoides ethenogenes (strain 195)).